Reading from the N-terminus, the 567-residue chain is Proline--tRNA ligase (567 aa).

This sequence belongs to the class-II aminoacyl-tRNA synthetase family. ProS type 1 subfamily. In terms of assembly, homodimer.

The protein localises to the cytoplasm. The enzyme catalyses tRNA(Pro) + L-proline + ATP = L-prolyl-tRNA(Pro) + AMP + diphosphate. Its function is as follows. Catalyzes the attachment of proline to tRNA(Pro) in a two-step reaction: proline is first activated by ATP to form Pro-AMP and then transferred to the acceptor end of tRNA(Pro). As ProRS can inadvertently accommodate and process non-cognate amino acids such as alanine and cysteine, to avoid such errors it has two additional distinct editing activities against alanine. One activity is designated as 'pretransfer' editing and involves the tRNA(Pro)-independent hydrolysis of activated Ala-AMP. The other activity is designated 'posttransfer' editing and involves deacylation of mischarged Ala-tRNA(Pro). The misacylated Cys-tRNA(Pro) is not edited by ProRS. In Geobacillus kaustophilus (strain HTA426), this protein is Proline--tRNA ligase.